Reading from the N-terminus, the 163-residue chain is Ribosome maturation factor RimP (163 aa).

Belongs to the RimP family.

It is found in the cytoplasm. Functionally, required for maturation of 30S ribosomal subunits. This Streptococcus thermophilus (strain CNRZ 1066) protein is Ribosome maturation factor RimP.